Here is a 655-residue protein sequence, read N- to C-terminus: MLKHDLDYLELLSESFPTATEVATEIINLEAILNLPKGTEHFLADIHGEYEAFIHVLKNASGSIRRKVDEVFGGQLRQNQKRELCTLIYYPREKLELVKQSDERMEDWYMVTLNQLIKVCQKAAEKYTRSKVRKTLPPKYSYIIQELLHEDGVNPNKSAYISSIFSSIISTGCADDFIIAISETIQRLVIDHLHVVGDVFDRGPGAHIIMDTLMKYHHFDIQWGNHDMLWMGAAVGNASCMANVVRIALRYANLDTLESGYGINLLPLARFAMDTYADDPCTVFKPKLAQADQTYDDKSVYLISQMHKAISIIQFKLEHQIIARHPEYKMDNRDLFHLVNFTDGTIKLSSGVYPMLDMNFPTVDPADPYALTEQEQNIVDRLMGCFMRSEKLQNHLKCLYRHGSMYLTYNMNLLYHASIPLNKDKSLKKVRVGDKTYAGRELLDKVEEMIRTAYVAPEKSDQRLAAVDYMWYLWCGPDSPLFDKAMMTTFERYFIEDKATHHEEKGYYYVYRQEKAVCEMILKEFGLEGPDTHIINGHVPVKAKKGELPIGAEGKLMLIDGGFSKAYQSSTGIAGYTLIFNSQGLHLVQHEPFSSTRKAIEEMEDIKSITVVREVTSHRMLVKDTDNGHLLSKQVENLKKLLQAYSYGLIKERKK.

This sequence belongs to the FBPase class 3 family. Mn(2+) is required as a cofactor.

It catalyses the reaction beta-D-fructose 1,6-bisphosphate + H2O = beta-D-fructose 6-phosphate + phosphate. It functions in the pathway carbohydrate biosynthesis; gluconeogenesis. The protein is Fructose-1,6-bisphosphatase class 3 of Porphyromonas gingivalis (strain ATCC 33277 / DSM 20709 / CIP 103683 / JCM 12257 / NCTC 11834 / 2561).